The following is a 114-amino-acid chain: Large ribosomal subunit protein uL18 (114 aa).

The protein belongs to the universal ribosomal protein uL18 family. In terms of assembly, part of the 50S ribosomal subunit; part of the 5S rRNA/L5/L18/L25 subcomplex. Contacts the 5S and 23S rRNAs.

In terms of biological role, this is one of the proteins that bind and probably mediate the attachment of the 5S RNA into the large ribosomal subunit, where it forms part of the central protuberance. The polypeptide is Large ribosomal subunit protein uL18 (Bacteroides fragilis (strain ATCC 25285 / DSM 2151 / CCUG 4856 / JCM 11019 / LMG 10263 / NCTC 9343 / Onslow / VPI 2553 / EN-2)).